Here is a 417-residue protein sequence, read N- to C-terminus: MAP kinase-interacting serine/threonine-protein kinase 1 (417 aa).

Residues 1–20 (MVSSQPVPIDDGGKRRKKKR) are disordered. Residues 37–321 (RLTDELLGEG…AAQVLQHPWL (285 aa)) form the Protein kinase domain. ATP-binding positions include 43–51 (LGEGAYAKV) and Lys66. Residue Asp158 is the Proton acceptor of the active site. Residues 397 to 417 (AHARKGGSHLTHTTVTSQGAT) are disordered. Over residues 406 to 417 (LTHTTVTSQGAT) the composition is skewed to polar residues.

This sequence belongs to the protein kinase superfamily. CAMK Ser/Thr protein kinase family. Mg(2+) serves as cofactor.

It catalyses the reaction L-seryl-[protein] + ATP = O-phospho-L-seryl-[protein] + ADP + H(+). The catalysed reaction is L-threonyl-[protein] + ATP = O-phospho-L-threonyl-[protein] + ADP + H(+). In terms of biological role, may play a role in the response to environmental stress and cytokines. Appears to regulate translation by phosphorylating EIF4E, thus increasing the affinity of this protein for the 7-methylguanosine-containing mRNA cap. The sequence is that of MAP kinase-interacting serine/threonine-protein kinase 1 (mknk1) from Xenopus tropicalis (Western clawed frog).